The sequence spans 148 residues: DnaJ homolog subfamily C member 24 (148 aa).

A J domain is found at 10–81 (DWYSILGADP…ETKKKYDLQR (72 aa)). The 56-residue stretch at 92-147 (VDAQVRLEEMSWNQGDESFFLSCRCGGKYTVSKDEAQEATLISCDACSLIVELLHQ) folds into the DPH-type MB domain. Cys114, Cys116, Cys135, and Cys138 together coordinate Zn(2+).

This sequence belongs to the DPH4 family. In terms of assembly, monomer and homooligomer. Iron binding promotes oligomerization. Detected in heart, brain, spleen, lung, liver, kidney and testis.

The protein localises to the cytoplasm. Its subcellular location is the cytoskeleton. The protein operates within protein modification; peptidyl-diphthamide biosynthesis. Its function is as follows. The iron-bound form is redox-active and can function as electron carrier. Stimulates the ATPase activity of several Hsp70-type chaperones. This ability is enhanced by iron-binding. Plays a role in the diphthamide biosynthesis, a post-translational modification of histidine which occurs in translation elongation factor 2 (EEF2). The protein is DnaJ homolog subfamily C member 24 (Dnajc24) of Mus musculus (Mouse).